A 150-amino-acid chain; its full sequence is MKYQQLENLESGWKWKYLVKKHREGELITRYIEASAAQAAVDDLLTIENEPVLVHAWIEQHMNPALMNRMKQTIRARRKRHFNAEHQHTRKKSIDLEFVVWQRLAGLAQRRGKTLSETIVQLIEDAEHKEKYASKMSSLKHDLQELLGKE.

The protein belongs to the MatP family. As to quaternary structure, homodimer.

It localises to the cytoplasm. Functionally, required for spatial organization of the terminus region of the chromosome (Ter macrodomain) during the cell cycle. Prevents early segregation of duplicated Ter macrodomains during cell division. Binds specifically to matS, which is a 13 bp signature motif repeated within the Ter macrodomain. This Klebsiella pneumoniae (strain 342) protein is Macrodomain Ter protein.